The sequence spans 79 residues: MFRCPICGFKTLRLFALKQHTRREHVLVKCPICGFTGKHLSQHFYSRYDIDHLIYCYLFSSFRLPKNVRLAIKRKLEVE.

This is an uncharacterized protein from Sulfolobus spindle-shape virus 1 (SSV1).